Reading from the N-terminus, the 518-residue chain is Suppressor of hairless homolog (518 aa).

A disordered region spans residues 22–59; sequence ETDQQRSHVKERVNGTPNQNGGTSTSSKPRSVFENRPP. Positions 24–34 are enriched in basic and acidic residues; the sequence is DQQRSHVKERV. Polar residues predominate over residues 36 to 50; the sequence is GTPNQNGGTSTSSKP. 3 consecutive DNA-binding regions follow at residues 89–96, 223–232, and 296–328; these read KSYGNEKR, RLRSQTVSTR, and RKVD…ERMY. Residues 386-476 enclose the IPT/TIG domain; the sequence is PVVHSLQLNG…YPTNLTFTFT (91 aa).

Belongs to the Su(H) family. In terms of assembly, interacts with activated Notch proteins.

It is found in the nucleus. Transcriptional regulator that plays a central role in Notch signaling, a signaling pathway involved in cell-cell communication that regulates a broad spectrum of cell-fate determinations. Acts as a transcriptional repressor when it is not associated with Notch proteins. When associated with some Notch protein, it acts as a transcriptional activator that activates transcription of Notch target genes. This is Suppressor of hairless homolog (RBP-JK) from Halocynthia roretzi (Sea squirt).